We begin with the raw amino-acid sequence, 299 residues long: Formamidopyrimidine-DNA glycosylase (299 aa).

The Schiff-base intermediate with DNA role is filled by Pro-2. The active-site Proton donor is the Glu-3. Lys-58 functions as the Proton donor; for beta-elimination activity in the catalytic mechanism. Residues His-106, Arg-125, and Lys-168 each contribute to the DNA site. Residues 259–295 (RVYDRVGHACPTKGCTGRVGRIVQGGRSTFFCETCQV) form an FPG-type zinc finger. The Proton donor; for delta-elimination activity role is filled by Arg-285.

Belongs to the FPG family. As to quaternary structure, monomer. It depends on Zn(2+) as a cofactor.

The catalysed reaction is Hydrolysis of DNA containing ring-opened 7-methylguanine residues, releasing 2,6-diamino-4-hydroxy-5-(N-methyl)formamidopyrimidine.. It catalyses the reaction 2'-deoxyribonucleotide-(2'-deoxyribose 5'-phosphate)-2'-deoxyribonucleotide-DNA = a 3'-end 2'-deoxyribonucleotide-(2,3-dehydro-2,3-deoxyribose 5'-phosphate)-DNA + a 5'-end 5'-phospho-2'-deoxyribonucleoside-DNA + H(+). Involved in base excision repair of DNA damaged by oxidation or by mutagenic agents. Acts as a DNA glycosylase that recognizes and removes damaged bases. Has a preference for oxidized purines, such as 7,8-dihydro-8-oxoguanine (8-oxoG). Has AP (apurinic/apyrimidinic) lyase activity and introduces nicks in the DNA strand. Cleaves the DNA backbone by beta-delta elimination to generate a single-strand break at the site of the removed base with both 3'- and 5'-phosphates. The polypeptide is Formamidopyrimidine-DNA glycosylase (Methylorubrum extorquens (strain CM4 / NCIMB 13688) (Methylobacterium extorquens)).